The following is a 480-amino-acid chain: Endothelial transcription factor GATA-2 (480 aa).

Residue serine 73 is modified to Phosphoserine. At arginine 86 the chain carries Asymmetric dimethylarginine. The tract at residues 166–208 (SGSHLFGFPPTPPKEVSPDPSTTGAASPASPSAGGSVARGEDK) is disordered. A compositionally biased stretch (low complexity) spans 183-201 (PDPSTTGAASPASPSAGGS). Serine 192 carries the phosphoserine modification. GATA-type zinc fingers lie at residues 295 to 319 (CVNCGATATPLWRRDGTGHYLCNAC) and 349 to 373 (CANCQTTTTTLWRRNANGDPVCNAC). Lysine 389 is covalently cross-linked (Glycyl lysine isopeptide (Lys-Gly) (interchain with G-Cter in SUMO2)). A disordered region spans residues 457–480 (TPIHPSSSLSFGHPHPSSMVTAMG).

In terms of assembly, interacts with BRD3. Interacts with AR and CCAR1. Interacts with MDFIC.

It localises to the nucleus. Its function is as follows. Transcriptional activator which regulates endothelin-1 gene expression in endothelial cells. Binds to the consensus sequence 5'-AGATAG-3'. Plays an important role in the regulation of phagocytosis in alveolar macrophages, particularly during P.carinii infection. The sequence is that of Endothelial transcription factor GATA-2 from Rattus norvegicus (Rat).